Consider the following 451-residue polypeptide: Phosphoglucosamine mutase (451 aa).

Ser107 (phosphoserine intermediate) is an active-site residue. The Mg(2+) site is built by Ser107, Asp246, Asp248, and Asp250. A Phosphoserine modification is found at Ser107.

Belongs to the phosphohexose mutase family. It depends on Mg(2+) as a cofactor. In terms of processing, activated by phosphorylation.

It catalyses the reaction alpha-D-glucosamine 1-phosphate = D-glucosamine 6-phosphate. In terms of biological role, catalyzes the conversion of glucosamine-6-phosphate to glucosamine-1-phosphate. This chain is Phosphoglucosamine mutase, found in Azoarcus sp. (strain BH72).